Here is a 248-residue protein sequence, read N- to C-terminus: Probable transcriptional regulatory protein trd_1132 (248 aa).

The protein belongs to the TACO1 family.

The protein localises to the cytoplasm. The polypeptide is Probable transcriptional regulatory protein trd_1132 (Thermomicrobium roseum (strain ATCC 27502 / DSM 5159 / P-2)).